Reading from the N-terminus, the 220-residue chain is Protein-L-isoaspartate O-methyltransferase (220 aa).

The active site involves serine 64.

This sequence belongs to the methyltransferase superfamily. L-isoaspartyl/D-aspartyl protein methyltransferase family.

The protein resides in the cytoplasm. The enzyme catalyses [protein]-L-isoaspartate + S-adenosyl-L-methionine = [protein]-L-isoaspartate alpha-methyl ester + S-adenosyl-L-homocysteine. In terms of biological role, catalyzes the methyl esterification of L-isoaspartyl residues in peptides and proteins that result from spontaneous decomposition of normal L-aspartyl and L-asparaginyl residues. It plays a role in the repair and/or degradation of damaged proteins. The protein is Protein-L-isoaspartate O-methyltransferase of Thermococcus onnurineus (strain NA1).